Consider the following 424-residue polypeptide: CinA-like protein (424 aa).

The protein belongs to the CinA family.

This chain is CinA-like protein, found in Shewanella baltica (strain OS155 / ATCC BAA-1091).